The chain runs to 70 residues: Brevinin-1Vb (70 aa).

Residues 1–22 form the signal peptide; it reads MFTLKKSLLLLFFLGTINLSLC. A propeptide spanning residues 23–44 is cleaved from the precursor; that stretch reads EEERNAEEERRDEPDEMNVEVE. C64 and C70 are disulfide-bonded.

In terms of tissue distribution, expressed by the skin glands.

The protein localises to the secreted. Functionally, antimicrobial peptide. This is Brevinin-1Vb from Odorrana versabilis (Chinese bamboo leaf odorous frog).